The following is an 88-amino-acid chain: EKC/KEOPS complex subunit SPAC4H3.13 (88 aa).

The protein belongs to the CTAG/PCC1 family. As to quaternary structure, component of the EKC/KEOPS complex composed of at least of SPAP27G11.07c/BUD32, cgi121, gon7, pgp2 and SPAC4H3.13/PCC1; the whole complex dimerizes.

It is found in the cytoplasm. The protein localises to the nucleus. Its subcellular location is the chromosome. The protein resides in the telomere. In terms of biological role, component of the EKC/KEOPS complex that is required for the formation of a threonylcarbamoyl group on adenosine at position 37 (t(6)A37) in tRNAs that read codons beginning with adenine. The complex is probably involved in the transfer of the threonylcarbamoyl moiety of threonylcarbamoyl-AMP (TC-AMP) to the N6 group of A37. SPAC4H3.13/PCC1 functions as a dimerization module for the complex. The EKC/KEOPS complex also promotes both telomere uncapping and telomere elongation. The complex is required for efficient recruitment of transcriptional coactivators. The protein is EKC/KEOPS complex subunit SPAC4H3.13 of Schizosaccharomyces pombe (strain 972 / ATCC 24843) (Fission yeast).